Consider the following 1084-residue polypeptide: Probable hemoglobin and hemoglobin-haptoglobin-binding protein 3 (1084 aa).

The signal sequence occupies residues 1 to 24; sequence MTNFKFSLLACSIAFALNASTVYA. Repeat copies occupy residues 26–29, 30–33, 34–37, 38–41, 42–45, 46–49, 50–53, 54–57, 58–61, 62–65, 66–69, and 70–73. Positions 26–73 are 12 X 4 AA tandem repeats of Q-P-T-N; that stretch reads QPTNQPTNQPTNQPTNQPTNQPTNQPTNQPTNQPTNQPTNQPTNQPTN. Residues 26-75 show a composition bias toward low complexity; it reads QPTNQPTNQPTNQPTNQPTNQPTNQPTNQPTNQPTNQPTNQPTNQPTNQN. The interval 26 to 77 is disordered; it reads QPTNQPTNQPTNQPTNQPTNQPTNQPTNQPTNQPTNQPTNQPTNQPTNQNSN. A TonB box motif is present at residues 83 to 90; sequence EQINVSGS. The 126-residue stretch at 95 to 220 folds into the TBDR plug domain; the sequence is NIKEKKVGET…LGGSVIFETK (126 aa). In terms of domain architecture, TBDR beta-barrel spans 228–1084; sequence DKDYYLSYKR…NYRMSVQFEF (857 aa). A TonB C-terminal box motif is present at residues 1067-1084; that stretch reads NRFYAPGRNYRMSVQFEF.

The protein belongs to the TonB-dependent receptor family. Hemoglobin/haptoglobin binding protein subfamily.

The protein resides in the cell outer membrane. Functionally, acts as a receptor for hemoglobin or the hemoglobin/haptoglobin complex of the human host and is required for heme uptake. This chain is Probable hemoglobin and hemoglobin-haptoglobin-binding protein 3, found in Haemophilus influenzae (strain ATCC 51907 / DSM 11121 / KW20 / Rd).